We begin with the raw amino-acid sequence, 316 residues long: Pantothenate kinase (316 aa).

95–102 is a binding site for ATP; the sequence is GSVAVGKS.

The protein belongs to the prokaryotic pantothenate kinase family.

The protein localises to the cytoplasm. The catalysed reaction is (R)-pantothenate + ATP = (R)-4'-phosphopantothenate + ADP + H(+). The protein operates within cofactor biosynthesis; coenzyme A biosynthesis; CoA from (R)-pantothenate: step 1/5. The sequence is that of Pantothenate kinase from Enterobacter sp. (strain 638).